The primary structure comprises 218 residues: Octanoyltransferase (218 aa).

The 187-residue stretch at 32–218 (GDAPEAVWLL…LRTFSRSFPD (187 aa)) folds into the BPL/LPL catalytic domain. Substrate is bound by residues 71-78 (RGGQYTYH), 151-153 (AIG), and 164-166 (GLS). Catalysis depends on C182, which acts as the Acyl-thioester intermediate.

Belongs to the LipB family.

The protein resides in the cytoplasm. It catalyses the reaction octanoyl-[ACP] + L-lysyl-[protein] = N(6)-octanoyl-L-lysyl-[protein] + holo-[ACP] + H(+). It functions in the pathway protein modification; protein lipoylation via endogenous pathway; protein N(6)-(lipoyl)lysine from octanoyl-[acyl-carrier-protein]: step 1/2. In terms of biological role, catalyzes the transfer of endogenously produced octanoic acid from octanoyl-acyl-carrier-protein onto the lipoyl domains of lipoate-dependent enzymes. Lipoyl-ACP can also act as a substrate although octanoyl-ACP is likely to be the physiological substrate. The polypeptide is Octanoyltransferase (Cereibacter sphaeroides (strain ATCC 17025 / ATH 2.4.3) (Rhodobacter sphaeroides)).